The following is a 501-amino-acid chain: Large ribosomal subunit protein uL2m (501 aa).

Disordered regions lie at residues glycine 187–arginine 217 and alanine 459–asparagine 501. Polar residues predominate over residues asparagine 198–glycine 213. Residues aspartate 464 to threonine 474 show a composition bias toward basic and acidic residues.

Belongs to the universal ribosomal protein uL2 family.

It is found in the mitochondrion. The sequence is that of Large ribosomal subunit protein uL2m (RPL2) from Marchantia polymorpha (Common liverwort).